Consider the following 565-residue polypeptide: Oxygen-dependent choline dehydrogenase (565 aa).

6-35 contributes to the FAD binding site; the sequence is DYIIVGAGSAGNTLATRLTEDASVSVLLLE. The disordered stretch occupies residues 182–203; the sequence is QQEGFGPMDRSVTKKGRRSSTA. His475 serves as the catalytic Proton acceptor.

It belongs to the GMC oxidoreductase family. It depends on FAD as a cofactor.

It carries out the reaction choline + A = betaine aldehyde + AH2. The enzyme catalyses betaine aldehyde + NAD(+) + H2O = glycine betaine + NADH + 2 H(+). The protein operates within amine and polyamine biosynthesis; betaine biosynthesis via choline pathway; betaine aldehyde from choline (cytochrome c reductase route): step 1/1. Its function is as follows. Involved in the biosynthesis of the osmoprotectant glycine betaine. Catalyzes the oxidation of choline to betaine aldehyde and betaine aldehyde to glycine betaine at the same rate. This Pseudomonas entomophila (strain L48) protein is Oxygen-dependent choline dehydrogenase.